A 337-amino-acid chain; its full sequence is GDP-mannose transporter 1 (337 aa).

Over Met-1 to Ser-16 the chain is Cytoplasmic. The chain crosses the membrane as a helical span at residues Val-17–Val-37. Over Thr-38 to Asn-51 the chain is Lumenal. Residues Phe-52–Leu-72 traverse the membrane as a helical segment. Residues Gly-73–Ser-92 lie on the Cytoplasmic side of the membrane. Residues Phe-93–Ile-113 traverse the membrane as a helical segment. At Tyr-114–Asn-119 the chain is on the lumenal side. A glycan (N-linked (GlcNAc...) asparagine) is linked at Asn-119. A helical membrane pass occupies residues Leu-120–Met-140. Over Glu-141–Ser-144 the chain is Cytoplasmic. Residues Phe-145–Ala-165 form a helical membrane-spanning segment. The Lumenal portion of the chain corresponds to Lys-166 to Ser-180. Residues Phe-181–Ile-201 form a helical membrane-spanning segment. Residues Met-202–Asp-215 are Cytoplasmic-facing. A helical membrane pass occupies residues Thr-216–Glu-236. Residues Asp-237 to Leu-252 are Lumenal-facing. Residues Asn-242, Asn-246, and Asn-249 are each glycosylated (N-linked (GlcNAc...) asparagine). A helical transmembrane segment spans residues Thr-253–Val-273. The Cytoplasmic portion of the chain corresponds to Arg-274–Thr-279. Residues Thr-280 to Phe-300 form a helical membrane-spanning segment. Residues Asp-301–Arg-304 lie on the Lumenal side of the membrane. The helical transmembrane segment at Asn-305–Ala-325 threads the bilayer. Over Lys-326–Lys-337 the chain is Cytoplasmic.

It belongs to the TPT transporter family. SLC35D subfamily. Homooligomer.

The protein localises to the golgi apparatus membrane. It is found in the cytoplasmic vesicle membrane. Its subcellular location is the endoplasmic reticulum membrane. In terms of biological role, involved in the import of GDP-mannose from the cytoplasm into the Golgi lumen. Defective copy causes severe glycosylation defect and abnormal retention of soluble endoplasmic reticulum proteins. Involved in vanadate sensitivity. This is GDP-mannose transporter 1 (VRG4) from Saccharomyces cerevisiae (strain YJM789) (Baker's yeast).